The following is a 424-amino-acid chain: ATP-sensitive inward rectifier potassium channel 8 (424 aa).

The Cytoplasmic portion of the chain corresponds to 1–69 (MLARKSIIPE…IFTTLVDLKW (69 aa)). Serine 6 bears the Phosphoserine mark. The helical transmembrane segment at 70-94 (RHTLVIFTMSFLCSWLLFAIMWWLV) threads the bilayer. At 95 to 126 (AFAHGDIYAYMEKGITEKSGLESAVCVTNVRS) the chain is on the extracellular side. Positions 127-138 (FTSAFLFSIEVQ) form an intramembrane region, helical; Pore-forming. Residues 139 to 145 (VTIGFGG) constitute an intramembrane region (pore-forming). A Selectivity filter motif is present at residues 140-145 (TIGFGG). The Extracellular segment spans residues 146–154 (RMMTEECPL). The helical transmembrane segment at 155-176 (AITVLILQNIVGLIINAVMLGC) threads the bilayer. The Cytoplasmic segment spans residues 177 to 424 (IFMKTAQAHR…PEGNQCPSES (248 aa)). Residues 374-424 (LSHQNSLRKRNSMRRNNSMRRSNSIRRNNSSLMVPKVQFMTPEGNQCPSES) form a disordered region. Residues 387–404 (RRNNSMRRSNSIRRNNSS) show a composition bias toward low complexity.

The protein belongs to the inward rectifier-type potassium channel (TC 1.A.2.1) family. KCNJ8 subfamily. In terms of assembly, interacts with ABCC9. As to expression, widely expressed, including in pancreatic islets, pituitary, skeletal muscle and heart.

It localises to the membrane. It carries out the reaction K(+)(in) = K(+)(out). Inward rectifier potassium channels are characterized by a greater tendency to allow potassium to flow into the cell rather than out of it. Their voltage dependence is regulated by the concentration of extracellular potassium; as external potassium is raised, the voltage range of the channel opening shifts to more positive voltages. The inward rectification is mainly due to the blockage of outward current by internal magnesium. This channel is activated by internal ATP and can be blocked by external barium. Can form a sulfonyllurea-sensitive but ATP-insensitive potassium channel with ABCC9. The protein is ATP-sensitive inward rectifier potassium channel 8 (Kcnj8) of Rattus norvegicus (Rat).